Here is a 695-residue protein sequence, read N- to C-terminus: Highly divergent homeobox (695 aa).

DNA-binding regions (homeobox) lie at residues 3–63 (LRSV…SSKS) and 440–503 (ALQD…RLMG). Residues 56 to 81 (RRKMSSKSALESGGAPPGTAHTAPSV) are disordered. The interval 653-695 (QQALLSDLPPELEEMDFNHTSPEPDDTSFSLSSLSEKNASDSL) is disordered. Residues 679–695 (TSFSLSSLSEKNASDSL) are compositionally biased toward polar residues.

Its subcellular location is the nucleus. The polypeptide is Highly divergent homeobox (HDX) (Gallus gallus (Chicken)).